We begin with the raw amino-acid sequence, 471 residues long: MSREMGELTQTRLQKIWIPHSSSSSLLQRRRGSSIPQFTNSPTMVIMVGLPARGKTYISTKLTRYLNWIGTPTKVFNLGQYRREAVSYRNYEFFRPDNMEAQLIRKQCALAALKDVHKYLSREEGHVAVFDATNTTRERRSLILQFAKEHGYKVFFIESICNDPDIIAENIKQVKLGSPDYIDCDQEKVLEDFLKRIECYEINYQPLDEELDSHLSYIKIFDVGTRYMVNRVQDHVQSRTAYYLMNIHVTPRSIYLCRHGESELNLRGRIGGDSGLSARGKQYAYALANFIRSQSISSLKVWTSHMKRTIQTAEALGVPYEQWKALNEIDAGVCEEMTYEEIQEHYPEEFALRDQDKYRYRYPKGESYEDLVQRLEPVIMELERQENVLVICHQAVMRCLLAYFLDKSSDELPYLKCPLHTVLKLTPVAYGCRVESIYLNVEAVNTHRDKPENVDITREPEEALDTVPAHY.

S2 bears the N-acetylserine mark. The segment at 2–250 (SREMGELTQT…AYYLMNIHVT (249 aa)) is 6-phosphofructo-2-kinase. A Phosphoserine; by PKA modification is found at S33. An ATP-binding site is contributed by 49-57 (GLPARGKTY). Residues R82 and R105 each contribute to the beta-D-fructose 6-phosphate site. D131 is a catalytic residue. The beta-D-fructose 6-phosphate site is built by T133 and R139. S141 bears the Phosphoserine mark. C161 is an active-site residue. 170–175 (NIKQVK) provides a ligand contact to ATP. K175, R196, and Y200 together coordinate beta-D-fructose 6-phosphate. The interval 251–471 (PRSIYLCRHG…EALDTVPAHY (221 aa)) is fructose-2,6-bisphosphatase. Position 258 (R258) interacts with beta-D-fructose 2,6-bisphosphate. H259 (tele-phosphohistidine intermediate) is an active-site residue. Beta-D-fructose 2,6-bisphosphate-binding residues include N265, G271, and R308. Residue E328 is the Proton donor/acceptor of the active site. 6 residues coordinate beta-D-fructose 2,6-bisphosphate: Y339, R353, K357, Y368, Q394, and R398. 350-353 (FALR) contributes to the ATP binding site. ATP-binding positions include 394-398 (QAVMR) and Y430.

In the C-terminal section; belongs to the phosphoglycerate mutase family. In terms of assembly, homodimer. In terms of tissue distribution, liver.

It catalyses the reaction beta-D-fructose 2,6-bisphosphate + H2O = beta-D-fructose 6-phosphate + phosphate. The catalysed reaction is beta-D-fructose 6-phosphate + ATP = beta-D-fructose 2,6-bisphosphate + ADP + H(+). Phosphorylation at Ser-33 inhibits the kinase and activates the bisphosphatase. Synthesis and degradation of fructose 2,6-bisphosphate. The sequence is that of 6-phosphofructo-2-kinase/fructose-2,6-bisphosphatase 1 from Mus musculus (Mouse).